The sequence spans 296 residues: Myeloid differentiation primary response protein MyD88 (296 aa).

In terms of domain architecture, Death spans 54 to 109 (MDFEYLEIRQLETQADPTGRLLDAWQGRPGASVGRLLELLTKLGRDDVLLELGPSI). Positions 110–155 (EEDCQKYILKQQQEEAEKPLQVAAVDSSVPRTAELAGITTLDDPLG) are intermediate domain. Residues 159 to 293 (ERFDAFICYC…WFWTRLAKAL (135 aa)) enclose the TIR domain. S244 bears the Phosphoserine mark.

In terms of assembly, homodimer. Also forms heterodimers with TIRAP. Binds to TLR2, TLR5, IRAK1, IRAK2 and IRAK4 via their respective TIR domains. Interacts with IL18R1. Interacts with BMX, IL1RL1, IKBKE and IRF7. Interacts with LRRFIP1 and LRRFIP2; this interaction positively regulates Toll-like receptor (TLR) signaling in response to agonist. Interacts with FLII. LRRFIP1 and LRRFIP2 compete with FLII for MYD88-binding. Interacts with IRF1. Upon IL1B treatment, forms a complex with PELI1, IRAK1, IRAK4 and TRAF6; this complex recruits MAP3K7/TAK1, TAB1 and TAB2 to mediate NF-kappa-B activation. Direct binding of SMAD6 to PELI1 prevents the complex formation and hence negatively regulates IL1R-TLR signaling and eventually NF-kappa-B-mediated gene expression. May interact with PIK3AP1. Interacts (via TIR domain) with DHX9 (via H2A and OB-fold regions); this interaction is direct. Interacts with OTUD4 deubiquitinase; the interaction is direct. Interacts with TLR4. As to quaternary structure, (Microbial infection) In case of infection, interacts with uropathogenic E.coli protein TcpC; suppressing Toll-like receptor (TLR)-mediated cytokine production. (Microbial infection) In case of infection, interacts with uropathogenic E.faecalis protein TcpF; suppressing Toll-like receptor (TLR)-mediated cytokine production. In terms of assembly, (Microbial infection) In case of infection, interacts with B.melitensis protein TcpB. As to quaternary structure, (Microbial infection) Interacts with human metapneumovirus protein M2-2; this interaction prevents MYD88-mediated cytokine secretion. Ubiquitinated; undergoes 'Lys-63'-linked polyubiquitination. OTUD4 specifically hydrolyzes 'Lys-63'-linked polyubiquitinated MYD88. Deubiquitinated by USP3 that cleaves 'Lys-63'-linked ubiquitin chains leading to inhibition of MYD88-induced NF-kappa-B signaling. Post-translationally, (Microbial infection) Ubiquitinated by human herpesvirus 8 (KSHV) protein RTA/ORF50, leading to proteasomal degradation ans suppression of TLR4 signaling pathway. In terms of tissue distribution, ubiquitous.

The protein resides in the cytoplasm. It localises to the nucleus. Functionally, adapter protein involved in the Toll-like receptor and IL-1 receptor signaling pathway in the innate immune response. Acts via IRAK1, IRAK2, IRF7 and TRAF6, leading to NF-kappa-B activation, cytokine secretion and the inflammatory response. Increases IL-8 transcription. Involved in IL-18-mediated signaling pathway. Activates IRF1 resulting in its rapid migration into the nucleus to mediate an efficient induction of IFN-beta, NOS2/INOS, and IL12A genes. Upon TLR8 activation by GU-rich single-stranded RNA (GU-rich RNA) derived from viruses such as SARS-CoV-2, SARS-CoV and HIV-1, induces IL1B release through NLRP3 inflammasome activation. MyD88-mediated signaling in intestinal epithelial cells is crucial for maintenance of gut homeostasis and controls the expression of the antimicrobial lectin REG3G in the small intestine. In Homo sapiens (Human), this protein is Myeloid differentiation primary response protein MyD88.